A 469-amino-acid chain; its full sequence is Argininosuccinate lyase (469 aa).

It belongs to the lyase 1 family. Argininosuccinate lyase subfamily.

It is found in the cytoplasm. It catalyses the reaction 2-(N(omega)-L-arginino)succinate = fumarate + L-arginine. It functions in the pathway amino-acid biosynthesis; L-arginine biosynthesis; L-arginine from L-ornithine and carbamoyl phosphate: step 3/3. This is Argininosuccinate lyase from Burkholderia multivorans (strain ATCC 17616 / 249).